A 159-amino-acid chain; its full sequence is Major latex protein 146 (159 aa).

Belongs to the MLP family. Laticifer.

It is found in the vacuole. It localises to the cytoplasmic vesicle. In terms of biological role, not known; MLPs constitute up to 50% of the soluble latex protein. The chain is Major latex protein 146 (MLP146) from Papaver somniferum (Opium poppy).